The following is a 75-amino-acid chain: U6-lycotoxin-Ls1b (75 aa).

The signal sequence occupies residues 1-21 (MKLLLFTALVLVVISLIEVEA). The propeptide occupies 22-25 (ENER).

It belongs to the neurotoxin 19 (CSTX) family. 06 (U6-Lctx) subfamily. In terms of processing, contains 4 disulfide bonds. In terms of tissue distribution, expressed by the venom gland.

The protein localises to the secreted. The polypeptide is U6-lycotoxin-Ls1b (Lycosa singoriensis (Wolf spider)).